The following is a 179-amino-acid chain: NADH dehydrogenase [ubiquinone] 1 beta subcomplex subunit 9 (179 aa).

An N-acetylalanine modification is found at A2. A Phosphoserine modification is found at S85. A disordered region spans residues E136–D162.

It belongs to the complex I LYR family. As to quaternary structure, mammalian complex I is composed of 45 different subunits.

Its subcellular location is the mitochondrion inner membrane. Its function is as follows. Accessory subunit of the mitochondrial membrane respiratory chain NADH dehydrogenase (Complex I), that is believed to be not involved in catalysis. Complex I functions in the transfer of electrons from NADH to the respiratory chain. The immediate electron acceptor for the enzyme is believed to be ubiquinone. The polypeptide is NADH dehydrogenase [ubiquinone] 1 beta subcomplex subunit 9 (NDUFB9) (Pongo abelii (Sumatran orangutan)).